The primary structure comprises 688 residues: Polyphosphate kinase (688 aa).

Asparagine 45 provides a ligand contact to ATP. 2 residues coordinate Mg(2+): arginine 375 and arginine 405. One can recognise a PLD phosphodiesterase domain in the interval proline 430 to threonine 464. Histidine 435 acts as the Phosphohistidine intermediate in catalysis. ATP-binding residues include tyrosine 468, arginine 564, and histidine 592.

Belongs to the polyphosphate kinase 1 (PPK1) family. It depends on Mg(2+) as a cofactor. An intermediate of this reaction is the autophosphorylated ppk in which a phosphate is covalently linked to a histidine residue through a N-P bond.

The enzyme catalyses [phosphate](n) + ATP = [phosphate](n+1) + ADP. Functionally, catalyzes the reversible transfer of the terminal phosphate of ATP to form a long-chain polyphosphate (polyP). In Salmonella typhimurium (strain LT2 / SGSC1412 / ATCC 700720), this protein is Polyphosphate kinase.